The primary structure comprises 198 residues: MSDTPVVVIPRKGYVDGHHGYHHSYHSGLNLLLRLLQAFATAAAVIVMLLATQTEFTRYGEVRGRWRDYPAYKWFIIANAVVFVYALLATLVACCALIARRGPLSYSPSAWLTFLLDFVAASALMSAASAALAVALIARNGQNLQGQHYWPTFCNYVTRFCDYAQGAIIASFCGFGLLALSTLLAASALHHLAWHRLH.

Residues M1–N30 are Cytoplasmic-facing. The chain crosses the membrane as a helical span at residues L31–A51. The Extracellular portion of the chain corresponds to T52 to K73. The helical transmembrane segment at W74 to C94 threads the bilayer. Residues C95–D117 lie on the Cytoplasmic side of the membrane. Residues F118–A138 form a helical membrane-spanning segment. Over R139–Q165 the chain is Extracellular. The helical transmembrane segment at G166–A186 threads the bilayer. The Cytoplasmic segment spans residues S187 to H198.

Belongs to the Casparian strip membrane proteins (CASP) family. In terms of assembly, homodimer and heterodimers.

Its subcellular location is the cell membrane. The polypeptide is CASP-like protein 1U1 (Physcomitrium patens (Spreading-leaved earth moss)).